We begin with the raw amino-acid sequence, 521 residues long: Probable tRNA (uracil-O(2)-)-methyltransferase (521 aa).

This sequence belongs to the TRM44 family.

It is found in the cytoplasm. The catalysed reaction is uridine(44) in tRNA(Ser) + S-adenosyl-L-methionine = 2'-O-methyluridine(44) in tRNA(Ser) + S-adenosyl-L-homocysteine + H(+). Probable adenosyl-L-methionine (AdoMet)-dependent tRNA (uracil-O(2)-)-methyltransferase. The sequence is that of Probable tRNA (uracil-O(2)-)-methyltransferase (trmt44) from Drosophila melanogaster (Fruit fly).